A 280-amino-acid chain; its full sequence is MRRAELAGLKTMAWVPAESAVEELMPRLLPVEPCDLTEGFDPSVPPRTPQEYLRRVQIEAAQCPDVVVAQIDPKKLKRKQSVNISLSGCQPAPEGYSPTLQWQQQQVAQFSTVRQNVNKHRSHWKSQQLDSNVTMPKSEDEEGWKKFCLGEKLCADGAVGPATNESPGIDYVQIGFPPLLSIVSRMNQATVTSVLEYLSNWFGERDFTPELGRWLYALLACLEKPLLPEAHSLIRQLARRCSEVRLLVDSKDDERVPALNLLICLVSRYFDQRDLADEPS.

The tract at residues 1–39 (MRRAELAGLKTMAWVPAESAVEELMPRLLPVEPCDLTEG) is may play a minor inhibitory role in snRNA binding to 5Sm (SNRPD1, SNRPD2, SNRPE, SNRPF and SNRPG) during snRNP assembly by inserting into the RNA binding pocket of 5Sm. Phosphoserine is present on residues Ser-81 and Ser-166.

It belongs to the gemin-2 family. In terms of assembly, monomer. Part of the core SMN complex that contains SMN1, GEMIN2/SIP1, DDX20/GEMIN3, GEMIN4, GEMIN5, GEMIN6, GEMIN7, GEMIN8 and STRAP/UNRIP. Part of the SMN-Sm complex that contains SMN1, GEMIN2/SIP1, DDX20/GEMIN3, GEMIN4, GEMIN5, GEMIN6, GEMIN7, GEMIN8, STRAP/UNRIP and the Sm proteins SNRPB, SNRPD1, SNRPD2, SNRPD3, SNRPE, SNRPF and SNRPG. Interacts with GEMIN5; the interaction is direct. Interacts (via C-terminus) with SMN1; the interaction is direct. Interacts with SNRPD1; the interaction is direct. Interacts with SNRPD2; the interaction is direct. Interacts (via N-terminus) with SNRPF; the interaction is direct. Interacts (via N-terminus) with SNRPE; the interaction is direct. Interacts (via N-terminus) with SNRPG; the interaction is direct.

Its subcellular location is the nucleus. The protein localises to the gem. It localises to the cytoplasm. Its function is as follows. The SMN complex catalyzes the assembly of small nuclear ribonucleoproteins (snRNPs), the building blocks of the spliceosome, and thereby plays an important role in the splicing of cellular pre-mRNAs. Most spliceosomal snRNPs contain a common set of Sm proteins SNRPB, SNRPD1, SNRPD2, SNRPD3, SNRPE, SNRPF and SNRPG that assemble in a heptameric protein ring on the Sm site of the small nuclear RNA to form the core snRNP (Sm core). In the cytosol, the Sm proteins SNRPD1, SNRPD2, SNRPE, SNRPF and SNRPG (5Sm) are trapped in an inactive 6S pICln-Sm complex by the chaperone CLNS1A that controls the assembly of the core snRNP. To assemble core snRNPs, the SMN complex accepts the trapped 5Sm proteins from CLNS1A. Binding of snRNA inside 5Sm ultimately triggers eviction of the SMN complex, thereby allowing binding of SNRPD3 and SNRPB to complete assembly of the core snRNP. Within the SMN complex, GEMIN2 constrains the conformation of 5Sm, thereby promoting 5Sm binding to snRNA containing the snRNP code (a nonameric Sm site and a 3'-adjacent stem-loop), thus preventing progression of assembly until a cognate substrate is bound. This chain is Gem-associated protein 2, found in Homo sapiens (Human).